We begin with the raw amino-acid sequence, 5082 residues long: Malformin synthetase mlfA (5082 aa).

Residues E225–L616 are adenylation 1. The Carrier 1 domain occupies S749–E822. S783 carries the post-translational modification O-(pantetheine 4'-phosphoryl)serine. Residues E860–A1291 are condensation 1. The tract at residues D1319–R1708 is adenylation 2. The 78-residue stretch at T1846–A1923 folds into the Carrier 2 domain. S1883 carries the post-translational modification O-(pantetheine 4'-phosphoryl)serine. 2 disordered regions span residues G1924–D1953 and G1986–A2012. Composition is skewed to low complexity over residues S1926–D1950 and S1988–S2005. The tract at residues E2058–L2473 is condensation 2. Residues R2496 to L2888 form an adenylation 3 region. Residues R3024–R3100 enclose the Carrier 3 domain. O-(pantetheine 4'-phosphoryl)serine is present on S3061. Condensation stretches follow at residues W3117–Q3582 and N3603–V4022. The adenylation 4 stretch occupies residues H4047–F4426. Positions M4560–I4636 constitute a Carrier 4 domain. O-(pantetheine 4'-phosphoryl)serine is present on S4597. Residues D4673–N5000 are condensation 5.

It belongs to the NRP synthetase family.

It participates in secondary metabolite biosynthesis. Nonribosomal peptide synthetase; part of the gene cluster that mediates the biosynthesis of malformins, cyclic pentapeptides with a disulfide bond between 2 consecutive cysteins, that show potential anti-tumor as well as antimalarial and antitrypanosomal properties. The nonribosomal peptide synthetase mlfA is responsible of the formation of the cyclic pentapeptide. The malformin biosynthesis clusters in malformin-producing fungi also contain enzymes involved in the formation of the disulfide bond between the two consecutive cysteins within malformins, in addition to additional tailoring enzymes such as methyltransferases or oxidoreductases. They are also composed of up to 4 major facilitator superfamily transporters, and transcription factors probably involved in the regulation of the expression of those clusters. The polypeptide is Malformin synthetase mlfA (Aspergillus luchuensis (strain CBS 106.47)).